Consider the following 151-residue polypeptide: Protein ECM12 (151 aa).

N2 carries an N-linked (GlcNAc...) asparagine glycan. The next 2 helical transmembrane spans lie at L17–F37 and A51–F71. Residues N132 and N137 are each glycosylated (N-linked (GlcNAc...) asparagine).

Its subcellular location is the membrane. Its function is as follows. May be involved in cell wall organization and biogenesis. This is Protein ECM12 (ECM12) from Saccharomyces cerevisiae (strain ATCC 204508 / S288c) (Baker's yeast).